A 702-amino-acid polypeptide reads, in one-letter code: Polyribonucleotide nucleotidyltransferase (702 aa).

Mg(2+)-binding residues include Asp487 and Asp493. The region spanning 554 to 613 (PKILTMQINPDKIRDVIGPSGKQINKIIEETGVKIDIEQDGTIFISSVNEEMNKKAKKII) is the KH domain. An S1 motif domain is found at 623 to 691 (GQVYLGKVKR…KQGRVNLSRK (69 aa)).

The protein belongs to the polyribonucleotide nucleotidyltransferase family. Requires Mg(2+) as cofactor.

It localises to the cytoplasm. It catalyses the reaction RNA(n+1) + phosphate = RNA(n) + a ribonucleoside 5'-diphosphate. Functionally, involved in mRNA degradation. Catalyzes the phosphorolysis of single-stranded polyribonucleotides processively in the 3'- to 5'-direction. The protein is Polyribonucleotide nucleotidyltransferase of Anoxybacillus flavithermus (strain DSM 21510 / WK1).